A 1413-amino-acid polypeptide reads, in one-letter code: DNA-directed RNA polymerase subunit beta' (1413 aa).

Residues Cys-70, Cys-72, Cys-85, and Cys-88 each contribute to the Zn(2+) site. The Mg(2+) site is built by Asp-460, Asp-462, and Asp-464. The Zn(2+) site is built by Cys-819, Cys-893, Cys-900, and Cys-903.

Belongs to the RNA polymerase beta' chain family. The RNAP catalytic core consists of 2 alpha, 1 beta, 1 beta' and 1 omega subunit. When a sigma factor is associated with the core the holoenzyme is formed, which can initiate transcription. The cofactor is Mg(2+). Zn(2+) serves as cofactor.

The enzyme catalyses RNA(n) + a ribonucleoside 5'-triphosphate = RNA(n+1) + diphosphate. DNA-dependent RNA polymerase catalyzes the transcription of DNA into RNA using the four ribonucleoside triphosphates as substrates. This Burkholderia vietnamiensis (strain G4 / LMG 22486) (Burkholderia cepacia (strain R1808)) protein is DNA-directed RNA polymerase subunit beta'.